Here is a 183-residue protein sequence, read N- to C-terminus: Peptidyl-tRNA hydrolase (183 aa).

Tyr-15 contacts tRNA. The active-site Proton acceptor is the His-20. TRNA-binding residues include Tyr-67 and Asn-69.

This sequence belongs to the PTH family. In terms of assembly, monomer.

It localises to the cytoplasm. It catalyses the reaction an N-acyl-L-alpha-aminoacyl-tRNA + H2O = an N-acyl-L-amino acid + a tRNA + H(+). Its function is as follows. Hydrolyzes ribosome-free peptidyl-tRNAs (with 1 or more amino acids incorporated), which drop off the ribosome during protein synthesis, or as a result of ribosome stalling. Catalyzes the release of premature peptidyl moieties from peptidyl-tRNA molecules trapped in stalled 50S ribosomal subunits, and thus maintains levels of free tRNAs and 50S ribosomes. The sequence is that of Peptidyl-tRNA hydrolase from Chlamydia abortus (strain DSM 27085 / S26/3) (Chlamydophila abortus).